We begin with the raw amino-acid sequence, 53 residues long: Ovomucoid (53 aa).

Positions 3–53 (VDCSEYPQPTCTTEHRPVCGSNNETYGNKCNFCNAVVKSNGTLTVSHFGKC) constitute a Kazal-like domain. Intrachain disulfides connect Cys5–Cys35, Cys13–Cys32, and Cys21–Cys53. Asn42 carries N-linked (GlcNAc...) asparagine glycosylation.

The protein resides in the secreted. This chain is Ovomucoid, found in Polyplectron bicalcaratum (Grey peacock-pheasant).